Here is a 123-residue protein sequence, read N- to C-terminus: Large ribosomal subunit protein bL12 (123 aa).

It belongs to the bacterial ribosomal protein bL12 family. As to quaternary structure, homodimer. Part of the ribosomal stalk of the 50S ribosomal subunit. Forms a multimeric L10(L12)X complex, where L10 forms an elongated spine to which 2 to 4 L12 dimers bind in a sequential fashion. Binds GTP-bound translation factors.

Forms part of the ribosomal stalk which helps the ribosome interact with GTP-bound translation factors. Is thus essential for accurate translation. This chain is Large ribosomal subunit protein bL12, found in Mycoplasmopsis synoviae (strain 53) (Mycoplasma synoviae).